A 513-amino-acid chain; its full sequence is ATP synthase subunit alpha, mitochondrial (513 aa).

ATP is bound at residue 170-177 (GDRQTGKT).

It belongs to the ATPase alpha/beta chains family. In terms of assembly, F-type ATPases have 2 components, CF(1) - the catalytic core - and CF(0) - the membrane proton channel. CF(1) has five subunits: alpha(3), beta(3), gamma(1), delta(1), epsilon(1). CF(0) has three main subunits: a, b and c.

It is found in the mitochondrion. Its subcellular location is the mitochondrion inner membrane. Mitochondrial membrane ATP synthase (F(1)F(0) ATP synthase or Complex V) produces ATP from ADP in the presence of a proton gradient across the membrane which is generated by electron transport complexes of the respiratory chain. F-type ATPases consist of two structural domains, F(1) - containing the extramembraneous catalytic core, and F(0) - containing the membrane proton channel, linked together by a central stalk and a peripheral stalk. During catalysis, ATP synthesis in the catalytic domain of F(1) is coupled via a rotary mechanism of the central stalk subunits to proton translocation. Subunits alpha and beta form the catalytic core in F(1). Rotation of the central stalk against the surrounding alpha(3)beta(3) subunits leads to hydrolysis of ATP in three separate catalytic sites on the beta subunits. Subunit alpha does not bear the catalytic high-affinity ATP-binding sites. This Marchantia polymorpha (Common liverwort) protein is ATP synthase subunit alpha, mitochondrial (ATPA).